A 556-amino-acid polypeptide reads, in one-letter code: Glutamine--tRNA ligase (556 aa).

A 'HIGH' region motif is present at residues 34–44 (PEPNGYLHIGH). Residues 35 to 37 (EPN) and 41 to 47 (HIGHAKS) contribute to the ATP site. Residues Asp67 and Tyr212 each contribute to the L-glutamine site. Residues Thr231, 261–262 (RL), and 269–271 (MSK) each bind ATP. The short motif at 268–272 (VMSKR) is the 'KMSKS' region element.

The protein belongs to the class-I aminoacyl-tRNA synthetase family. Monomer.

The protein resides in the cytoplasm. It catalyses the reaction tRNA(Gln) + L-glutamine + ATP = L-glutaminyl-tRNA(Gln) + AMP + diphosphate. The chain is Glutamine--tRNA ligase from Vibrio campbellii (strain ATCC BAA-1116).